Consider the following 383-residue polypeptide: Chaperone protein DnaJ (383 aa).

Residues 5–70 enclose the J domain; it reads DYYEALGVAR…QKRAAYDQFG (66 aa). Residues 139 to 217 form a CR-type zinc finger; it reads GTEVQIRVPT…CGGRGRVQSQ (79 aa). Cys-152, Cys-155, Cys-169, Cys-172, Cys-191, Cys-194, Cys-205, and Cys-208 together coordinate Zn(2+). 4 CXXCXGXG motif repeats span residues 152-159, 169-176, 191-198, and 205-212; these read CDACDGKG, CPTCKGHG, CPRCGGSG, and CRKCGGRG. The segment at 230–249 is disordered; the sequence is TGDRIRLSGEGEPGENGGPP.

It belongs to the DnaJ family. In terms of assembly, homodimer. Zn(2+) is required as a cofactor.

Its subcellular location is the cytoplasm. Participates actively in the response to hyperosmotic and heat shock by preventing the aggregation of stress-denatured proteins and by disaggregating proteins, also in an autonomous, DnaK-independent fashion. Unfolded proteins bind initially to DnaJ; upon interaction with the DnaJ-bound protein, DnaK hydrolyzes its bound ATP, resulting in the formation of a stable complex. GrpE releases ADP from DnaK; ATP binding to DnaK triggers the release of the substrate protein, thus completing the reaction cycle. Several rounds of ATP-dependent interactions between DnaJ, DnaK and GrpE are required for fully efficient folding. Also involved, together with DnaK and GrpE, in the DNA replication of plasmids through activation of initiation proteins. This is Chaperone protein DnaJ from Alkalilimnicola ehrlichii (strain ATCC BAA-1101 / DSM 17681 / MLHE-1).